A 413-amino-acid chain; its full sequence is MKRIYLLVVGLYLLSFSRAEEGLNFPTYDGKDRVVSLSEKNLKQVLKRYDLLCLYYHEPVSSDKVAQKQFQLKEIVLELVAQVLEHKNIGFVMVDSRKEAKLAKRLGFSEEGSLYVLKGGRTIEFDGEFAADVLVEFLLDLIEDPVEIVNNKLEVQAFERIEDQIKLLGFFKNEDSEYYKAFQEAAEHFQPYIKFFATFDKGVAKKLSLKMNEVGFYEPFMDEPSVIPNKPYTEEELVEFVKEHQRPTLRPLRPEDMFETWEDDLNGIHIVAFAEKSDPDGYEFLEILKQVARDNTDNPDLSILWIDPDDFPLLVAYWEKTFKIDLFKPQIGVVNVTDADSVWMEIPDDDDLPTAEELEDWIEDVLSGKINTEDDDNEDEDDDGDNDNDDDDDDDDNSDEDNDDSDDDDDDDE.

The first 19 residues, 1–19, serve as a signal peptide directing secretion; that stretch reads MKRIYLLVVGLYLLSFSRA. The residue at position 282 (Tyr-282) is a Phosphotyrosine. A glycan (N-linked (GlcNAc...) asparagine) is linked at Asn-335. Residues 365-413 form a disordered region; that stretch reads VLSGKINTEDDDNEDEDDDGDNDNDDDDDDDDNSDEDNDDSDDDDDDDE. Residues 373–413 are compositionally biased toward acidic residues; that stretch reads EDDDNEDEDDDGDNDNDDDDDDDDNSDEDNDDSDDDDDDDE. Phosphoserine occurs at positions 398 and 405.

It belongs to the calsequestrin family. As to quaternary structure, monomer, homodimer and homooligomer. Mostly monomeric in the absence of calcium. Forms higher oligomers in a calcium-dependent manner. Dimers associate to form tetramers, that then form linear homomer chains. Interacts with ASPH and TRDN. In terms of processing, phosphorylation in the C-terminus, probably by CK2, moderately increases calcium buffering capacity. Post-translationally, N-glycosylated. Detected in stomach and vas deferens (at protein level).

It localises to the sarcoplasmic reticulum lumen. In terms of biological role, calsequestrin is a high-capacity, moderate affinity, calcium-binding protein and thus acts as an internal calcium store in muscle. Calcium ions are bound by clusters of acidic residues at the protein surface, especially at the interface between subunits. Can bind around 60 Ca(2+) ions. Regulates the release of lumenal Ca(2+) via the calcium release channel RYR2; this plays an important role in triggering muscle contraction. Plays a role in excitation-contraction coupling in the heart and in regulating the rate of heart beats. The protein is Calsequestrin-2 (Casq2) of Rattus norvegicus (Rat).